We begin with the raw amino-acid sequence, 336 residues long: Large ribosomal subunit protein uL10 (336 aa).

Residues 292 to 336 (LKEKLSSRAAAPAPEEKEEEVEEEAEEEEEEEEEDAAAGLGALFG) form a disordered region. The span at 307 to 327 (EKEEEVEEEAEEEEEEEEEDA) shows a compositional bias: acidic residues.

It belongs to the universal ribosomal protein uL10 family. Part of the 50S ribosomal subunit. Forms part of the ribosomal stalk which helps the ribosome interact with GTP-bound translation factors. Forms a heptameric L10(L12)2(L12)2(L12)2 complex, where L10 forms an elongated spine to which the L12 dimers bind in a sequential fashion.

In terms of biological role, forms part of the ribosomal stalk, playing a central role in the interaction of the ribosome with GTP-bound translation factors. The polypeptide is Large ribosomal subunit protein uL10 (Methanothermobacter thermautotrophicus (strain ATCC 29096 / DSM 1053 / JCM 10044 / NBRC 100330 / Delta H) (Methanobacterium thermoautotrophicum)).